A 607-amino-acid chain; its full sequence is Potassium transporter KimA (607 aa).

Over 1–30 (MYHSIKRFLIGKPLKSQAAGEQKLTKLKAL) the chain is Cytoplasmic. A helical transmembrane segment spans residues 31–49 (AMLSSDALSSVAYGTEQIL). K(+) contacts are provided by Asp-36 and Tyr-43. Topologically, residues 50-62 (IILATISAAAFWY) are extracellular. Residues 63–84 (SIPIAVGVLILLLALILSYRQI) traverse the membrane as a helical segment. Over 85-105 (IYAYPQGGGAYIVSKENLGEK) the chain is Cytoplasmic. The helical transmembrane segment at 106-134 (PGLIAGGSLLVDYILTVAVSISAGTDAIT) threads the bilayer. 2 residues coordinate K(+): Asp-117 and Ser-125. At 135 to 142 (SAFPALHD) the chain is on the extracellular side. Residues 143 to 162 (YHVPIAIFLVLVIMILNLRG) form a helical membrane-spanning segment. Residues 163-166 (LSES) lie on the Cytoplasmic side of the membrane. The chain crosses the membrane as a helical span at residues 167 to 190 (ASILAYPVYLFVVALLVLIAVGLF). Residues 191-214 (KLMTGQIDQPAHHTSLGTPVAGIT) lie on the Extracellular side of the membrane. Residues 215–238 (LFLLLKAFSSGCSALTGVEAISNA) form a helical membrane-spanning segment. The Cytoplasmic segment spans residues 239 to 249 (IPAFKNPPARN). The chain crosses the membrane as a helical span at residues 250–271 (AARTLAMMGILLAILFSGITVL). Over 272-298 (AYGYGTAPKPDETVVSQIASETFGRNV) the chain is Extracellular. Residues 299-323 (FYYVIQGVTSLILVLAANTGFSAFP) traverse the membrane as a helical segment. Topologically, residues 324–347 (QLAFNLARDQYMPRMFTVRGDRLG) are cytoplasmic. The helical transmembrane segment at 348-366 (FSNGIIFLGFASIVLIILF) threads the bilayer. Residues 367 to 372 (GGQTEH) lie on the Extracellular side of the membrane. The helical transmembrane segment at 373–393 (LIPLYAVGVFIPFTLSQTGMC) threads the bilayer. Residues 394–405 (MKWIKQKPKGWI) are Cytoplasmic-facing. The chain crosses the membrane as a helical span at residues 406-428 (GKMLINSCGALISFMVLSILFVT). The Extracellular segment spans residues 429–431 (KFN). A helical transmembrane segment spans residues 432–447 (VVWPVLIFMPIVVLLF). Residues 448–607 (FAIKNHYTAV…VATLPYHFKK (160 aa)) lie on the Cytoplasmic side of the membrane.

It belongs to the amino acid-polyamine-organocation (APC) superfamily. In terms of assembly, homodimer.

It is found in the cell membrane. The catalysed reaction is K(+)(in) + H(+)(in) = K(+)(out) + H(+)(out). Its activity is regulated as follows. Potassium uptake increases at lower external pH and is abolished by the proton ionophore carbonyl cyanide m-chlorophenylhydrazone (CCCP). Binds cyclic di-AMP (c-di-AMP), which inhibits the potassium transport activity. Its function is as follows. High-affinity potassium transporter. Functions as a K(+)/H(+) symporter. This Bacillus subtilis (strain 168) protein is Potassium transporter KimA.